Reading from the N-terminus, the 444-residue chain is Multidrug resistance protein MdtA (444 aa).

An N-terminal signal peptide occupies residues 1–20 (MKSQSKRTSRLFVFVGVVVA). Polar residues predominate over residues 37–52 (NNTSGAQQSARGQDTS). 2 disordered regions span residues 37-60 (NNTS…RNTP) and 399-444 (PRSA…AEKS). The span at 409 to 419 (ASAEKAAAEAE) shows a compositional bias: low complexity. Residues 435-444 (ARSTTAAEKS) show a composition bias toward polar residues.

The protein belongs to the membrane fusion protein (MFP) (TC 8.A.1) family. In terms of assembly, part of a tripartite efflux system composed of MdtA, MdtB and MdtC.

It is found in the cell inner membrane. The chain is Multidrug resistance protein MdtA from Yersinia pseudotuberculosis serotype I (strain IP32953).